The following is a 413-amino-acid chain: Aminopeptidase PepS (413 aa).

A divalent metal cation contacts are provided by E253, E319, E343, H348, H381, and D383.

The protein belongs to the peptidase M29 family. In terms of assembly, monomer. Co(2+) serves as cofactor. It depends on Zn(2+) as a cofactor. The cofactor is Mg(2+).

Functionally, exhibits a high specificity towards peptides possessing arginine or aromatic amino acids at the N-terminus. Could be involved both in bacterial growth by supplying amino acids. The chain is Aminopeptidase PepS (pepS) from Streptococcus thermophilus.